The sequence spans 393 residues: Succinate--CoA ligase [ADP-forming] subunit beta (393 aa).

One can recognise an ATP-grasp domain in the interval 9 to 242 (KELFAKHGVP…RAATDPLEWK (234 aa)). ATP-binding positions include K45, 52–54 (GRG), S94, and E99. Mg(2+) contacts are provided by N191 and D211. Substrate is bound by residues N262 and 324–326 (GIT).

The protein belongs to the succinate/malate CoA ligase beta subunit family. Heterotetramer of two alpha and two beta subunits. Requires Mg(2+) as cofactor.

It catalyses the reaction succinate + ATP + CoA = succinyl-CoA + ADP + phosphate. The enzyme catalyses GTP + succinate + CoA = succinyl-CoA + GDP + phosphate. The protein operates within carbohydrate metabolism; tricarboxylic acid cycle; succinate from succinyl-CoA (ligase route): step 1/1. Succinyl-CoA synthetase functions in the citric acid cycle (TCA), coupling the hydrolysis of succinyl-CoA to the synthesis of either ATP or GTP and thus represents the only step of substrate-level phosphorylation in the TCA. The beta subunit provides nucleotide specificity of the enzyme and binds the substrate succinate, while the binding sites for coenzyme A and phosphate are found in the alpha subunit. The sequence is that of Succinate--CoA ligase [ADP-forming] subunit beta from Mycobacterium leprae (strain Br4923).